The following is a 342-amino-acid chain: Heat-inducible transcription repressor HrcA (342 aa).

This sequence belongs to the HrcA family.

In terms of biological role, negative regulator of class I heat shock genes (grpE-dnaK-dnaJ and groELS operons). Prevents heat-shock induction of these operons. The sequence is that of Heat-inducible transcription repressor HrcA from Shouchella clausii (strain KSM-K16) (Alkalihalobacillus clausii).